We begin with the raw amino-acid sequence, 154 residues long: Egg-lysin (154 aa).

Residues M1–S18 form the signal peptide.

In terms of assembly, monomer. Homodimer. Molecules associate into dimers and then rapidly dissociate again. Interacts (as a monomer) with the egg vitelline layer protein VERL (via VERL repeats); each VERL chain can bind multiple copies of lysin. As to expression, sperm.

It is found in the cytoplasmic vesicle. Its subcellular location is the secretory vesicle. The protein localises to the acrosome lumen. Functionally, creates a 3 um hole in the egg vitelline layer through which the sperm passes. Does not have enzyme activity. Species-specific interaction between the sperm protein lysin and the egg protein VERL exposes a basic surface on lysin that may dissociate the egg vitelline layer via electrostatic repulsion. Plays a role in ensuring species-specific fertilization. This Haliotis fulgens (Green abalone) protein is Egg-lysin.